The primary structure comprises 71 residues: Glucose-repressible gene protein (71 aa).

The segment at 19–71 (TATASKEANKDVAKDSNQGVGTRLNAAGDAISDKVSENKHDAKAEAHKQGATH) is disordered. Residues 49-71 (ISDKVSENKHDAKAEAHKQGATH) are compositionally biased toward basic and acidic residues.

The chain is Glucose-repressible gene protein (grg-1) from Neurospora crassa (strain ATCC 24698 / 74-OR23-1A / CBS 708.71 / DSM 1257 / FGSC 987).